The following is a 191-amino-acid chain: Divergent paired-related homeobox (191 aa).

A compositionally biased stretch (basic and acidic residues) spans Met-1–His-15. Positions Met-1–Arg-20 are disordered. The homeobox DNA-binding region spans Ser-16–Lys-75.

This sequence belongs to the paired homeobox family.

The protein localises to the nucleus. Transcription factor that acts as a repressor. The polypeptide is Divergent paired-related homeobox (Homo sapiens (Human)).